The sequence spans 785 residues: MPGVIPSESNGLSRGSPSKKNRLSLKFFQKKETKRALDFTDSQENEEKASEYRASEIDQVVPAAQSSPINCEKRENLLPFVGLNNLGNTCYLNSILQVLYFCPGFKSGVKHLFNIISRKKEALKDEANQKDKGNCKEDSLASYELICSLQSLIISVEQLQASFLLNPEKYTDELATQPRRLLNTLRELNPMYEGYLQHDAQEVLQCILGNIQETCQLLKKEEVKNVAELPTKVEEIPHPKEEMNGINSIEMDSMRHSEDFKEKLPKGNGKRKSDTEFGNMKKKVKLSKEHQSLEENQRQTRSKRKATSDTLESPPKIIPKYISENESPRPSQKKSRVKINWLKSATKQPSILSKFCSLGKITTNQGVKGQSKENECDPEEDLGKCESDNTTNGCGLESPGNTVTPVNVNEVKPINKGEEQIGFELVEKLFQGQLVLRTRCLECESLTERREDFQDISVPVQEDELSKVEESSEISPEPKTEMKTLRWAISQFASVERIVGEDKYFCENCHHYTEAERSLLFDKMPEVITIHLKCFAASGLEFDCYGGGLSKINTPLLTPLKLSLEEWSTKPTNDSYGLFAVVMHSGITISSGHYTASVKVTDLNSLELDKGNFVVDQMCEIGKPEPLNEEEARGVVENYNDEEVSIRVGGNTQPSKVLNKKNVEAIGLLGGQKSKADYELYNKASNPDKVASTAFAENRNSETSDTTGTHESDRNKESSDQTGINISGFENKISYVVQSLKEYEGKWLLFDDSEVKVTEEKDFLNSLSPSTSPTSTPYLLFYKKL.

Disordered regions lie at residues 1 to 21 and 33 to 52; these read MPGV…SKKN and TKRA…ASEY. The segment covering 7 to 16 has biased composition (polar residues); it reads SESNGLSRGS. A phosphoserine mark is found at S16, S42, and S67. Positions 81-785 constitute a USP domain; it reads VGLNNLGNTC…TPYLLFYKKL (705 aa). C90 (nucleophile) is an active-site residue. 2 stretches are compositionally biased toward basic and acidic residues: residues 258–275 and 286–298; these read EDFK…KSDT and LSKE…ENQR. Residues 258–336 are disordered; it reads EDFKEKLPKG…SPRPSQKKSR (79 aa). Phosphoserine is present on residues S313 and S475. Residue H593 is the Proton acceptor of the active site. Positions 693-723 are disordered; it reads TAFAENRNSETSDTTGTHESDRNKESSDQTG. Residues 708 to 719 show a composition bias toward basic and acidic residues; it reads GTHESDRNKESS. The residue at position 768 (S768) is a Phosphoserine.

Belongs to the peptidase C19 family. As to quaternary structure, interacts with FANCD2 and PCNA. Interacts with WDR48. Interacts with ATAD5; the interaction regulates USP1-mediated PCNA deubiquitination. Post-translationally, autocatalytic cleavage of USP1 following UV irradiation inactivates it, leading to an increase in ubiquitinated PCNA, recruitment of POLH and translesion synthesis. Ubiquitinated by the CRL2(KLHDC2) complex following autocatalytic cleavage, leading to its degradation: the CRL2(KLHDC2) complex recognizes the diglycine (Gly-Gly) at the C-terminus.

It is found in the nucleus. It carries out the reaction Thiol-dependent hydrolysis of ester, thioester, amide, peptide and isopeptide bonds formed by the C-terminal Gly of ubiquitin (a 76-residue protein attached to proteins as an intracellular targeting signal).. Negative regulator of DNA damage repair which specifically deubiquitinates monoubiquitinated FANCD2. Also involved in PCNA-mediated translesion synthesis (TLS) by deubiquitinating monoubiquitinated PCNA. Has almost no deubiquitinating activity by itself and requires the interaction with WDR48 to have a high activity. The chain is Ubiquitin carboxyl-terminal hydrolase 1 (USP1) from Homo sapiens (Human).